Here is a 140-residue protein sequence, read N- to C-terminus: L-fucose mutarotase (140 aa).

Residue H22 is the Proton donor of the active site. Substrate is bound by residues D30, R107, and 129-131 (YGN).

It belongs to the RbsD / FucU family. FucU mutarotase subfamily. Homodecamer.

The protein resides in the cytoplasm. It carries out the reaction alpha-L-fucose = beta-L-fucose. The protein operates within carbohydrate metabolism; L-fucose metabolism. In terms of biological role, involved in the anomeric conversion of L-fucose. This Klebsiella pneumoniae subsp. pneumoniae (strain ATCC 700721 / MGH 78578) protein is L-fucose mutarotase.